The chain runs to 416 residues: Squalene synthase (416 aa).

The next 2 helical transmembrane spans lie at 285–304 and 386–406; these read VINF…NACY and FISY…FLIA.

The protein belongs to the phytoene/squalene synthase family. The cofactor is Mg(2+).

It is found in the endoplasmic reticulum membrane. It catalyses the reaction 2 (2E,6E)-farnesyl diphosphate + NADPH + H(+) = squalene + 2 diphosphate + NADP(+). The enzyme catalyses 2 (2E,6E)-farnesyl diphosphate + NADH + H(+) = squalene + 2 diphosphate + NAD(+). It functions in the pathway terpene metabolism; lanosterol biosynthesis; lanosterol from farnesyl diphosphate: step 1/3. The protein is Squalene synthase (fdfT) of Dictyostelium discoideum (Social amoeba).